The chain runs to 105 residues: Small ribosomal subunit protein uS10 (105 aa).

The protein belongs to the universal ribosomal protein uS10 family. As to quaternary structure, part of the 30S ribosomal subunit.

Functionally, involved in the binding of tRNA to the ribosomes. In Desulfotalea psychrophila (strain LSv54 / DSM 12343), this protein is Small ribosomal subunit protein uS10.